Consider the following 338-residue polypeptide: RAB6-interacting golgin (338 aa).

2 stretches are compositionally biased toward basic and acidic residues: residues 1-14 (MTEKFNGFSHDEIL) and 46-59 (RMPDKIFRQADQLR). 2 disordered regions span residues 1 to 109 (MTEK…LNLD) and 127 to 188 (ARDK…SPFK). 2 stretches are compositionally biased toward low complexity: residues 60 to 73 (KQQQQQPQQPIQKP) and 153 to 167 (SGGDSQTTSSTDDGS). The stretch at 192 to 244 (LKDFEQHRRMIEEQNKQKKQMLYQAIEQHTQKTAAESRKIEEIRHELSKLESD) forms a coiled coil. An essential for Sas-6 binding region spans residues 244–260 (DLAVDVALLRKQIDNAC). The necessary for localization to the centrosome stretch occupies residues 246 to 286 (AVDVALLRKQIDNACIHFANVEKQYVKIEAQFLRAKIELHN). The interval 246–323 (AVDVALLRKQ…TELMQKVGLS (78 aa)) is necessary for localization to the Golgi. Positions 260–286 (CIHFANVEKQYVKIEAQFLRAKIELHN) are necessary for interaction with Sas-6 and essential for homodimerization.

This sequence belongs to the GORAB family. As to quaternary structure, homodimer (via C-terminus); dimerization appears to be required for its trans-Golgi localization but not for its function and centriolar localization. Interacts (via C-terminus) with Rab6; binds Rab6 as a homodimer, this interaction seems to be required for trans-Golgi localization. Interacts (via C-terminus) with Sas-6; binds as a monomer to a Sas-6 homodimer.

It is found in the cytoplasm. The protein localises to the cytoskeleton. It localises to the microtubule organizing center. The protein resides in the centrosome. Its subcellular location is the centriole. It is found in the golgi apparatus. The protein localises to the trans-Golgi network. Required for centriole duplication likely through its interaction with Sas-6. During embryogenesis, maternally provided protein is required for centrosome duplication and nuclear division cycles of the syncytial embryos. In femoral chordotonal organs, required for sensory cilia structural integrity and functionality necessary for motor coordination. In male germline, has a role in cytokinesis which seems dependent on its localization to the Golgi. The protein is RAB6-interacting golgin of Drosophila melanogaster (Fruit fly).